Here is a 58-residue protein sequence, read N- to C-terminus: Cecropin-A (58 aa).

An N-terminal signal peptide occupies residues 1 to 23 (MNFSKIFIFVVLAVLLLCSQTEA). At Leu-57 the chain carries Leucine amide.

The protein belongs to the cecropin family. As to expression, relatively abundant in head, thorax and to a lesser extent in abdominal carcass and anterior midgut.

The protein localises to the secreted. Functionally, antibacterial activity against several Gram-positive and Gram-negative bacteria. Antifungal activity against A.fumigatus, B.cinerea, F.culmorum, F.oxysporum, N.crassa, C.albicans, C.neoformans and S.cerevisiae. The sequence is that of Cecropin-A (CecA) from Anopheles gambiae (African malaria mosquito).